Here is a 755-residue protein sequence, read N- to C-terminus: uncharacterized protein (755 aa).

Disordered stretches follow at residues 1–44, 72–91, 99–174, 393–467, 523–545, 584–672, and 734–755; these read MAAP…AAAQ, AEHS…ATAQ, FSLS…IPHY, TTNV…SSSR, LPKT…EGGG, VSSS…LPSG, and QAAT…PRRK. Composition is skewed to low complexity over residues 10–25 and 35–44; these read TTTQ…TTTT and TTTGSGAAAQ. Composition is skewed to low complexity over residues 112–130, 139–151, and 393–412; these read ISSS…NASS, SPDL…LSGS, and TTNV…TKST. A compositionally biased stretch (acidic residues) spans 429–446; sequence IEEDTIQFDDPGQGEDDN. A compositionally biased stretch (pro residues) spans 452-462; sequence NTPPPPGPPPN. The segment covering 536-545 has biased composition (gly residues); the sequence is ATGGVTEGGG. Positions 590-599 are enriched in polar residues; that stretch reads LPQPQVATTI. Low complexity-rich tracts occupy residues 600–666 and 740–755; these read TPQA…QTPQ and SQPS…PRRK.

This sequence belongs to the chlamydial CPn_0572/CT_456/TC_0741 family.

This is an uncharacterized protein from Chlamydia pneumoniae (Chlamydophila pneumoniae).